Consider the following 565-residue polypeptide: Carboxylesterase 1D (565 aa).

An N-terminal signal peptide occupies residues 1 to 18 (MGLYPLIWLSLAACTAWG). N-linked (GlcNAc...) asparagine glycosylation is present at Asn79. Cys87 and Cys116 form a disulfide bridge. Ser221 serves as the catalytic Acyl-ester intermediate. A disulfide bond links Cys273 and Cys284. Glu353 (charge relay system) is an active-site residue. At Lys382 the chain carries N6-succinyllysine. His466 serves as the catalytic Charge relay system. Asn489 carries N-linked (GlcNAc...) asparagine glycosylation. Residues 562-565 (HVEL) carry the Prevents secretion from ER motif.

The protein belongs to the type-B carboxylesterase/lipase family. As to quaternary structure, homotrimer. As to expression, highest expression occurs in liver with lower levels in adipose tissue, kidney, heart, intestine, lung, testis and thymus.

It localises to the endoplasmic reticulum lumen. The protein resides in the cytoplasm. Its subcellular location is the cytosol. The protein localises to the lipid droplet. It is found in the microsome. It carries out the reaction a carboxylic ester + H2O = an alcohol + a carboxylate + H(+). It catalyses the reaction a long-chain fatty acyl ethyl ester + H2O = a long-chain fatty acid + ethanol + H(+). The catalysed reaction is all-trans-retinyl hexadecanoate + H2O = all-trans-retinol + hexadecanoate + H(+). Major lipase in white adipose tissue. Involved in the metabolism of xenobiotics and of natural substrates. Hydrolyzes triacylglycerols and monoacylglycerols, with a preference for monoacylglycerols. The susceptibility of the substrate increases with decreasing acyl chain length of the fatty acid moiety. Catalyzes the synthesis of fatty acid ethyl esters. Hydrolyzes retinyl esters. The polypeptide is Carboxylesterase 1D (Mus musculus (Mouse)).